Consider the following 211-residue polypeptide: Uracil phosphoribosyltransferase (211 aa).

5-phospho-alpha-D-ribose 1-diphosphate contacts are provided by residues arginine 78, arginine 103, and aspartate 130–threonine 138. Uracil contacts are provided by residues isoleucine 195 and glycine 200–alanine 202. Aspartate 201 contributes to the 5-phospho-alpha-D-ribose 1-diphosphate binding site.

It belongs to the UPRTase family. Requires Mg(2+) as cofactor.

The catalysed reaction is UMP + diphosphate = 5-phospho-alpha-D-ribose 1-diphosphate + uracil. It participates in pyrimidine metabolism; UMP biosynthesis via salvage pathway; UMP from uracil: step 1/1. Its activity is regulated as follows. Allosterically activated by GTP. Its function is as follows. Catalyzes the conversion of uracil and 5-phospho-alpha-D-ribose 1-diphosphate (PRPP) to UMP and diphosphate. The chain is Uracil phosphoribosyltransferase from Pseudarthrobacter chlorophenolicus (strain ATCC 700700 / DSM 12829 / CIP 107037 / JCM 12360 / KCTC 9906 / NCIMB 13794 / A6) (Arthrobacter chlorophenolicus).